The following is a 775-amino-acid chain: MWIQVRTMDGRDTRRIDSLSKLTKVEDLRARIQQIFGVALESQRLFYRGKQMENGHTLFDYSVGLNDIVQLLVRQIPDSVPTKDKECGISDADSGCGSGQGESDKNSSCGEGATDVDGQPAGINSENVGPSLYKKNDLVDARDLNMGAWFEAQIVSVSKRVNPDGMSAEILDTSAASDDIIYHVKYEDYPENGVVQLTYKDVRLRARTTLPWHDLKVGQVVMVNYNPDEPKERGYWYDAEILRKRETRTIKEIYVKVLLGDAGDSLNDCRIRFVDEIYKIEEPGSAYITTESPQKRQNGPECKHCKDNPKRACRMCACYVCGGKQDPEKQLLCDECDMAFHIYCLKPPLSAIPQDEDWYCPDCRNDASEVVLAGEKLKESKKKAKMASASSSSQRDWGKGMACVGRSRECTIVPSNHYGPIPGVPVGTLWKFRVQVSESGVHRPHVAGIHGRSNDGSYSLVLAGGYEDDVDNGSEFTYTGSGGRDLSGNKRTAEQSCDQKLTNMNRALALNCSAPINDKEGAVAKDWRAGKPVRVVRNTKGKKHSKYAPEDGNRYDGIYKVVKYWPEKGKSGFLVWRYLLRRDDEEPAPWSKEGKERIKKLGLVMQYPDGYLESLASKEREKENKTEDELSESPSKGKRKRNSAGSGLSDAKSTPKKTKVESYKLSLDQKTLIKQDDLNAKLWREVMSFLKEGPKFLSKVEETFLCICCQEVVYEPITTECHHNICKGCLDRSFKALVHNCPACRHDLGKNYSLNVNKPLQAILSQLFPGYERGR.

The region spanning 1 to 77 is the Ubiquitin-like domain; that stretch reads MWIQVRTMDG…IVQLLVRQIP (77 aa). A disordered region spans residues 81–128; it reads PTKDKECGISDADSGCGSGQGESDKNSSCGEGATDVDGQPAGINSENV. Tudor-like regions lie at residues 131-207 and 214-283; these read SLYK…LRAR and DLKV…IEEP. A linker region spans residues 293-301; sequence PQKRQNGPE. A PHD-type zinc finger spans residues 299-366; that stretch reads GPECKHCKDN…DWYCPDCRND (68 aa). Histone H3R2me0 binding regions lie at residues 333-337 and 353-355; these read CDECD and PQD. One can recognise a YDG domain in the interval 419 to 582; the sequence is GPIPGVPVGT…FLVWRYLLRR (164 aa). Residues 445-446 are required to promote base flipping; the sequence is HV. DNA contacts are provided by residues 463–464 and D469; that span reads AG. Required for formation of a 5-methylcytosine-binding pocket stretches follow at residues 466–469 and 478–481; these read YEDD and YTGS. The span at 616-628 shows a compositional bias: basic and acidic residues; that stretch reads ASKEREKENKTED. A disordered region spans residues 616–655; the sequence is ASKEREKENKTEDELSESPSKGKRKRNSAGSGLSDAKSTP. The segment at 706-745 adopts an RING-type zinc-finger fold; it reads CICCQEVVYEPITTECHHNICKGCLDRSFKALVHNCPACR.

It is found in the nucleus. It catalyses the reaction S-ubiquitinyl-[E2 ubiquitin-conjugating enzyme]-L-cysteine + [acceptor protein]-L-lysine = [E2 ubiquitin-conjugating enzyme]-L-cysteine + N(6)-ubiquitinyl-[acceptor protein]-L-lysine.. The protein operates within protein modification; protein ubiquitination. Its function is as follows. Multidomain protein that acts as a key epigenetic regulator by bridging DNA methylation and chromatin modification. Specifically recognizes and binds hemimethylated DNA at replication forks via its YDG domain and recruits dnmt1 methyltransferase to ensure faithful propagation of the DNA methylation patterns through DNA replication. In addition to its role in maintenance of DNA methylation, also plays a key role in chromatin modification: through its tudor-like regions and PHD-type zinc fingers, specifically recognizes and binds histone H3 trimethylated at 'Lys-9' (H3K9me3) and unmethylated at 'Arg-2' (H3R2me0), respectively, and recruits chromatin proteins. Enriched in pericentric heterochromatin where it recruits different chromatin modifiers required for this chromatin replication. Also localizes to euchromatic regions where it negatively regulates transcription possibly by impacting DNA methylation and histone modifications. Has E3 ubiquitin-protein ligase activity by mediating the ubiquitination of target proteins. However, it is still unclear how E3 ubiquitin-protein ligase activity is related to its role in chromatin in vivo. The sequence is that of E3 ubiquitin-protein ligase UHRF1 (uhrf1) from Xenopus tropicalis (Western clawed frog).